Consider the following 309-residue polypeptide: MDKPAKRIVMIVGPTAVGKSDLGVYLAQQLHGEVINGDAYQIYRHMDIGTAKITPKEMQGVPHHLLDIADPTVAYSVAKFKKAATAMIDTVADRQQLPILVGGTGFYLNSLRLNLPLGGKAPPTAIRQRWQVALATNGQSWLWQQLAQRDPDAAQQIAPANTRRVIRALEVGELTGRRFSDQPQPAPLFSTLVIGLTTDRAVLYDRINARVDAMMQAGLLAEVEQLLKTVPADAQAMQAIGYKELVPYLHGQAELADCVALIKQHSRHFAKRQLTYFRNQMPTHWFDLVAHPEDKNAIVTLVQQWLKQR.

13-20 (GPTAVGKS) lines the ATP pocket. Residue 15-20 (TAVGKS) coordinates substrate.

This sequence belongs to the IPP transferase family. As to quaternary structure, monomer. The cofactor is Mg(2+).

The catalysed reaction is adenosine(37) in tRNA + dimethylallyl diphosphate = N(6)-dimethylallyladenosine(37) in tRNA + diphosphate. Its function is as follows. Catalyzes the transfer of a dimethylallyl group onto the adenine at position 37 in tRNAs that read codons beginning with uridine, leading to the formation of N6-(dimethylallyl)adenosine (i(6)A). This is tRNA dimethylallyltransferase from Lacticaseibacillus casei (strain BL23) (Lactobacillus casei).